A 317-amino-acid polypeptide reads, in one-letter code: COP9 signalosome complex subunit 6a (317 aa).

Residues 30-164 (TQLNPPASIC…VTIYESELHV (135 aa)) enclose the MPN domain.

It belongs to the peptidase M67A family. CSN6 subfamily. In terms of assembly, component of the CSN complex, probably composed of CSN1, CSN2, CSN3, CSN4, CSN5 (CSN5A or CSN5B), CSN6 (CSN6A or CSN6B), CSN7 and CSN8. Interacts with itself. In the complex, it probably interacts directly with CSN4 and CSN5A or CSN5B. Interacts with CSN7 (via C-terminal tail). Binds to the translation initiation factors TIF3E1.

It localises to the cytoplasm. It is found in the nucleus. Functionally, component of the COP9 signalosome complex (CSN), a complex involved in various cellular and developmental processes such as photomorphogenesis and auxin and jasmonate responses. The CSN complex is an essential regulator of the ubiquitin (Ubl) conjugation pathway by mediating the deneddylation of the cullin subunits of SCF-type E3 ligase complexes, leading to decrease the Ubl ligase activity of SCF. It is involved in repression of photomorphogenesis in darkness by regulating the activity of COP1-containing Ubl ligase complexes. The complex is also required for degradation of PSIAA6 by regulating the activity of the Ubl ligase SCF-TIR complex. Essential for the structural integrity of the CSN holocomplex. The chain is COP9 signalosome complex subunit 6a from Arabidopsis thaliana (Mouse-ear cress).